The following is a 456-amino-acid chain: Serine--tRNA ligase (456 aa).

The segment at 49–69 is disordered; the sequence is HERNEVSSTIGELKQAGEEEA. 241 to 243 is an L-serine binding site; sequence TAE. ATP is bound by residues 272–274 and valine 288; that span reads RQE. Glutamate 295 is a binding site for L-serine. 368-371 serves as a coordination point for ATP; it reads EVSS. Position 404 (serine 404) interacts with L-serine.

This sequence belongs to the class-II aminoacyl-tRNA synthetase family. Type-1 seryl-tRNA synthetase subfamily. In terms of assembly, homodimer. The tRNA molecule binds across the dimer.

The protein resides in the cytoplasm. The catalysed reaction is tRNA(Ser) + L-serine + ATP = L-seryl-tRNA(Ser) + AMP + diphosphate + H(+). The enzyme catalyses tRNA(Sec) + L-serine + ATP = L-seryl-tRNA(Sec) + AMP + diphosphate + H(+). It participates in aminoacyl-tRNA biosynthesis; selenocysteinyl-tRNA(Sec) biosynthesis; L-seryl-tRNA(Sec) from L-serine and tRNA(Sec): step 1/1. Functionally, catalyzes the attachment of serine to tRNA(Ser). Is also able to aminoacylate tRNA(Sec) with serine, to form the misacylated tRNA L-seryl-tRNA(Sec), which will be further converted into selenocysteinyl-tRNA(Sec). This chain is Serine--tRNA ligase, found in Halorubrum lacusprofundi (strain ATCC 49239 / DSM 5036 / JCM 8891 / ACAM 34).